The chain runs to 44 residues: Antimicrobial peptide 1b (44 aa).

One can recognise a Chitin-binding type-1 domain in the interval 1–42 (AQKCGEQGRGAKCPNCLCCGRYGFCGSTPDYCGVGCQSQCRG). 5 cysteine pairs are disulfide-bonded: Cys4–Cys19, Cys13–Cys25, Cys16–Cys43, Cys18–Cys32, and Cys36–Cys40.

Post-translationally, contains 5 disulfide bonds.

In terms of biological role, binds chitin. Has antifungal activity against F.oxysporum 16/10 (IC(50)=4.1 uM) and B.sorokiniana 6/10 (IC(50)=2.7 uM). Inhibits germination of fungal spores. This Leymus arenarius (Lyme grass) protein is Antimicrobial peptide 1b.